The chain runs to 337 residues: G-protein coupled receptor 26 (337 aa).

Over 1 to 10 (MNSWDAGLAG) the chain is Extracellular. The helical transmembrane segment at 11–31 (LLVGTMGVSLLSNALVLLCLL) threads the bilayer. Over 32 to 47 (HSADIRRQAPALFTLN) the chain is Cytoplasmic. A helical membrane pass occupies residues 48–68 (LTCGNLLCTVVNMPLTLAGVV). The Extracellular segment spans residues 69–81 (AQRQPAGDRLCRL). C79 and C156 form a disulfide bridge. The helical transmembrane segment at 82-102 (AAFLDTFLAANSMLSMAALSI) threads the bilayer. At 103–123 (DRWVAVVFPLSYRAKMRLRDA) the chain is on the cytoplasmic side. Residues 124–144 (ALMVAYTWLHALTFPAAALAL) form a helical membrane-spanning segment. Residues 145 to 168 (SWLGFHQLYASCTLCSRRPDERLR) are Extracellular-facing. The chain crosses the membrane as a helical span at residues 169–189 (FAVFTGAFHALSFLLSFVVLC). The Cytoplasmic portion of the chain corresponds to 190 to 245 (CTYLKVLKVARFHCKRIDVITMQTLVLLVDLHPSVRERCLEEQKRRRQRATKKIST). Residues 246 to 266 (FIGTFLVCFAPYVITRLVELF) form a helical membrane-spanning segment. Residues 267 to 276 (STVPIGSHWG) lie on the Extracellular side of the membrane. The chain crosses the membrane as a helical span at residues 277-297 (VLSKCLAYSKAASDPFVYSLL). Residues 298-337 (RHQYRKSCKEILNRLLHRRSIHSSGLTGDSHSQNILPVSE) lie on the Cytoplasmic side of the membrane.

Belongs to the G-protein coupled receptor 1 family. As to expression, highly expressed in the CNS, the highest expression is seen in the amygdala, hippocampus and thalamus. Weak expression is detected in testis. Down-regulated in glioblastoma.

It localises to the cell membrane. Its function is as follows. Orphan receptor. Displays a significant level of constitutive activity. Its effect is mediated by G(s)-alpha protein that stimulate adenylate cyclase, resulting in an elevation of intracellular cAMP. The protein is G-protein coupled receptor 26 (GPR26) of Homo sapiens (Human).